The chain runs to 255 residues: Taurine import ATP-binding protein TauB (255 aa).

An ABC transporter domain is found at 2 to 229 (LQISHLYADY…RFVAGESSRS (228 aa)). Residue 34-41 (GPSGCGKT) participates in ATP binding.

The protein belongs to the ABC transporter superfamily. Taurine importer (TC 3.A.1.17.1) family. The complex is composed of two ATP-binding proteins (TauB), two transmembrane proteins (TauC) and a solute-binding protein (TauA).

It is found in the cell inner membrane. It catalyses the reaction taurine(out) + ATP + H2O = taurine(in) + ADP + phosphate + H(+). Its function is as follows. Part of the ABC transporter complex TauABC involved in taurine import. Responsible for energy coupling to the transport system. The protein is Taurine import ATP-binding protein TauB of Shigella flexneri serotype 5b (strain 8401).